The chain runs to 501 residues: MNTMSHKFVLALDEGTTSARAILFDSDLNIVNIGQYEFPQHYPQPGYVEHDPEEIWEAQMLAVKKAISKIDAKQIVAIGITNQRETTVLWDAKSGKPVYNAIVWQDRRTSPITDWLKANYFKMIKDKTGLVPDPYFSASKIKWILDNVPNVREKAERGEIKFGTLDTYLIWRLTNGKAHVTDYSNASRTMLFNINKLECDREILELLKIPESILPEVKPSSEIYGYSEALGNLIPISGDAGDQQAALFGQVAFNVGEIKATYGTGSFILMNIGNNPIRSENLLTTIAWGLEKNKATYALEGSIFITGAAVQWFRDGLRAIDVSDEIEPLASNVEDNGGVYFVPAFVGLGAPYWDPYARGLIIGITRGTTKAHIARAILESMAYQTRDVIEVMQKESGISINSLKVDGGAAKDNLLMQFQADILGIKVIRPKVMETTSMGVAMLAGLGVGLWNSLEELRSIWKVDKEFIPSMSEEKRRALYSGWKEAVKRAMGWAKVVGGQV.

Position 16 (T16) interacts with ADP. Residues T16, T17, and S18 each coordinate ATP. Residue T16 coordinates sn-glycerol 3-phosphate. R20 is an ADP binding site. Sn-glycerol 3-phosphate-binding residues include R84, E85, Y135, and D242. Glycerol is bound by residues R84, E85, Y135, D242, and Q243. T264 and G307 together coordinate ADP. ATP-binding residues include T264, G307, Q311, and G408. Residue G408 coordinates ADP.

The protein belongs to the FGGY kinase family.

The enzyme catalyses glycerol + ATP = sn-glycerol 3-phosphate + ADP + H(+). Its pathway is polyol metabolism; glycerol degradation via glycerol kinase pathway; sn-glycerol 3-phosphate from glycerol: step 1/1. Its function is as follows. Key enzyme in the regulation of glycerol uptake and metabolism. Catalyzes the phosphorylation of glycerol to yield sn-glycerol 3-phosphate. This is Glycerol kinase from Saccharolobus islandicus (strain L.S.2.15 / Lassen #1) (Sulfolobus islandicus).